The following is a 132-amino-acid chain: Fatty acid-binding protein, intestinal (132 aa).

Ala2 carries the post-translational modification N-acetylalanine. Hexadecanoate contacts are provided by Trp83 and Arg107. Trp83 and Arg107 together coordinate tetradecanoate.

It belongs to the calycin superfamily. Fatty-acid binding protein (FABP) family. In terms of tissue distribution, expressed in the small intestine. Expression in the mucosal cells of the ileum extends from the midvillar region to the villus tips.

The protein localises to the cytoplasm. Functionally, FABPs are thought to play a role in the intracellular transport of long-chain fatty acids and their acyl-CoA esters. FABP2 is probably involved in triglyceride-rich lipoprotein synthesis. Binds saturated long-chain fatty acids with a high affinity, but binds with a lower affinity to unsaturated long-chain fatty acids. FABP2 may also help maintain energy homeostasis by functioning as a lipid sensor. The protein is Fatty acid-binding protein, intestinal (Fabp2) of Rattus norvegicus (Rat).